The sequence spans 185 residues: Elongation factor P (185 aa).

This sequence belongs to the elongation factor P family.

It is found in the cytoplasm. It functions in the pathway protein biosynthesis; polypeptide chain elongation. Its function is as follows. Involved in peptide bond synthesis. Stimulates efficient translation and peptide-bond synthesis on native or reconstituted 70S ribosomes in vitro. Probably functions indirectly by altering the affinity of the ribosome for aminoacyl-tRNA, thus increasing their reactivity as acceptors for peptidyl transferase. In Cyanothece sp. (strain PCC 7425 / ATCC 29141), this protein is Elongation factor P.